Consider the following 244-residue polypeptide: S-adenosyl-L-methionine-dependent Diels-Alderase iliD (244 aa).

The protein belongs to the class I-like SAM-binding methyltransferase superfamily. Erg6/SMT family. S-adenosyl-L-methionine serves as cofactor.

It catalyses the reaction 3-[(2E,4E,8S,10E,12Z)-4,8-dimethyltetradeca-2,4,10,12-tetraenoyl]-4-hydroxy-5-(4-hydroxyphenyl)-1,2-dihydropyridin-2-one = ilicicolin H. It functions in the pathway mycotoxin biosynthesis. Its function is as follows. S-adenosyl-l-methionine-dependent Diels-Alderase; part of the gene cluster that mediates the biosynthesis of ilicicolin H, a 4-hydroxy-2-pyridonealkaloid that has potent and broad antifungal activities by inhibiting the mitochondrial respiration chain. IliD catalyzes the Diels-Alder reaction that converts the acyclic 2-pyridone intermediate to 8-epi-ilicicolin H. The biosynthesis of ilicicolin H starts with formation of the tetramic acid by the hybrid PKS-NRPS synthetase iliA with the partnering trans-enoyl reductase iliB since iliA lacks a designated enoylreductase (ER) domain. The cytochrome P450 monooxygenase iliC then catalyzes the ring expansion of the tetramate to the acyclic 2-pyridone. The pericyclase iliD further converts the acyclic 2-pyridone into 8-epi-ilicicolin H. 8-epi-ilicicolin H might then spontaneously convert to ilicicolin H since ilicicolin H is produced in the absence of the epimerase iliE, in contrast to what was observed for the Talaromyces variabilis ilicolin H biosynthetic pathway. This chain is S-adenosyl-L-methionine-dependent Diels-Alderase iliD, found in Neonectria sp. (strain DH2).